The chain runs to 776 residues: Protein STRUBBELIG-RECEPTOR FAMILY 3 (776 aa).

Positions 1 to 29 are cleaved as a signal peptide; that stretch reads MAAKRSIYCLLLLPLLLSLLIWIPSISLA. Over 30-35 the chain is Cytoplasmic; it reads ATNPDD. The chain crosses the membrane as a helical span at residues 36 to 56; that stretch reads VAAINGLFAALGAPVLPGWIA. The Extracellular portion of the chain corresponds to 57–316; the sequence is SGGDPCGEAW…KGKNSSHTKK (260 aa). N72 carries N-linked (GlcNAc...) asparagine glycosylation. LRR repeat units follow at residues 99–120, 121–143, 145–167, 169–191, 193–215, and 216–236; these read SIRGIDFSNNRIGGSIPSTLPV, TLQHFFLSANQFTGSIPESLGTL, FLNDMSLNDNLLSGELPDVFQNL, GLINLDISSNNISGTLPPSMENL, TLTTLRVQNNQLSGTLDVLQGLP, and LQDLNIENNLFSGPIPDKLLS. The N-linked (GlcNAc...) asparagine glycan is linked to N179. N-linked (GlcNAc...) asparagine glycosylation is found at N248 and N253. The disordered stretch occupies residues 251–311; that stretch reads MINSTSTAPS…SSENSKGKNS (61 aa). Residues 254 to 268 are compositionally biased toward low complexity; the sequence is STSTAPSLSPSLSPT. A compositionally biased stretch (pro residues) spans 269–284; sequence KPAPTRPFSGVPPPPN. Residues 298–309 are compositionally biased toward low complexity; the sequence is SEGSSSENSKGK. N310 carries an N-linked (GlcNAc...) asparagine glycan. Residues 317 to 337 form a helical membrane-spanning segment; that stretch reads IILIAFAGVLVFIILVLAILL. At 338–776 the chain is on the cytoplasmic side; that stretch reads LLPKCARRRE…RHGSGDSTAD (439 aa). Residues 355-440 are disordered; the sequence is PHQVGADRGS…PPPPPPPPPP (86 aa). Residues 381–407 are compositionally biased toward basic and acidic residues; it reads RSEKVQREPFKKAGEEPKVLHDLERLR. The span at 426-440 shows a compositional bias: pro residues; sequence MPPPPPPPPPPPPPP. The region spanning 485-763 is the Protein kinase domain; it reads FAQENLIGSG…EVVQDLLDMI (279 aa). Residues 491 to 499 and K513 each bind ATP; that span reads IGSGMLGSV.

It belongs to the protein kinase superfamily. Ser/Thr protein kinase family. In terms of tissue distribution, expressed in seedlings, roots, stems, leaves, flowers and siliques.

It localises to the membrane. In terms of biological role, not essential for epidermal patterning and not redundant with STRUBBELIG. The protein is Protein STRUBBELIG-RECEPTOR FAMILY 3 (SRF3) of Arabidopsis thaliana (Mouse-ear cress).